Consider the following 109-residue polypeptide: uncharacterized protein (109 aa).

The interval 67–96 (YFGNKLWRPTPRSGQSGQSRPKTGPHGSQR) is disordered. A compositionally biased stretch (polar residues) spans 78-87 (RSGQSGQSRP).

This is an uncharacterized protein from Saccharomyces cerevisiae (strain ATCC 204508 / S288c) (Baker's yeast).